A 262-amino-acid chain; its full sequence is MNSPAPVGSPAPVSAPSLDVAGLAFAYPDGHQALFGVDFRVERGERVALLGPNGAGKTTLVLHLNGILTGGAGTVTVAGLPVGKRHMAQIRRKVGIVFQDPDDQLFMPTVREDVAFGPAAAGLTGAELEARVDRALDQVGMAEFKGRPPHHLSFGQRRRVAVATVLAMEPEILVLDEPSSNLDPASRRELADILRSLDVTVLMVTHDLPYALELCPRSLILSEGVIAADGRTGELLADDTLMRAHRLELPFGFDPRSVTMGA.

The ABC transporter domain occupies 18-248 (LDVAGLAFAY…DTLMRAHRLE (231 aa)). 51-58 (GPNGAGKT) contacts ATP.

It belongs to the ABC transporter superfamily.

It is found in the cell membrane. Probably part of an ABC transporter complex. Responsible for energy coupling to the transport system. The polypeptide is Putative ABC transporter ATP-binding protein SAV_3608 (Streptomyces avermitilis (strain ATCC 31267 / DSM 46492 / JCM 5070 / NBRC 14893 / NCIMB 12804 / NRRL 8165 / MA-4680)).